The primary structure comprises 150 residues: Probable cyclase FGR4 (150 aa).

It participates in secondary metabolite biosynthesis. Probable cyclase; part of the gene cluster that mediates the biosynthesis of the tetraketides fugralins such as linear fugralin A and cyclic fugralin B, volatile compounds that play a role in the asexual reproductive cycle but are not involved in pathogenicity. Fugralin B is similar to fugralin A except for a cyclization between the carboxylic acid C-8 and the alcohol on C-4 resulting in a six membered lactone ring, probably catalyzed by the cyclase FGR4. One of the key features of fugralins is the presence of a double methyl group, which is only rarely encountered in fungal secondary metabolites. As the fugralins cluster does not contain an independent methyltransferase, the PKS FGR1 is probably responsible for adding two methyl groups to the same carbon atom. The exact role of the individual cluster genes remains unknown and further work is needed to unravel the biosynthetic pathway. The protein is Probable cyclase FGR4 of Gibberella zeae (strain ATCC MYA-4620 / CBS 123657 / FGSC 9075 / NRRL 31084 / PH-1) (Wheat head blight fungus).